The chain runs to 137 residues: Cucumber peeling cupredoxin (137 aa).

Residue Q1 is modified to Pyrrolidone carboxylic acid. Residues 3 to 107 form the Phytocyanin domain; that stretch reads TVHIVGDNTG…GQKLSINVVA (105 aa). Residues H46, C89, H94, and Q99 each contribute to the Cu cation site. A disulfide bridge connects residues C60 and C95. Residue N109 is glycosylated (N-linked (GlcNAc...) asparagine). The disordered stretch occupies residues 112-137; sequence VSMPPPSSSPPSSVMPPPVMPPPSPS. The span at 114–137 shows a compositional bias: pro residues; sequence MPPPSSSPPSSVMPPPVMPPPSPS. 4-hydroxyproline; partial is present on P115. P116, P117, P121, and P122 each carry 4-hydroxyproline. At P127 the chain carries 4-hydroxyproline; partial. 5 positions are modified to 4-hydroxyproline: P128, P129, P133, P134, and P136.

This chain is Cucumber peeling cupredoxin, found in Cucumis sativus (Cucumber).